Here is an 853-residue protein sequence, read N- to C-terminus: DNA mismatch repair protein MutS (853 aa).

614–621 (GPNMGGKS) is a binding site for ATP.

It belongs to the DNA mismatch repair MutS family.

Functionally, this protein is involved in the repair of mismatches in DNA. It is possible that it carries out the mismatch recognition step. This protein has a weak ATPase activity. This Escherichia coli O6:K15:H31 (strain 536 / UPEC) protein is DNA mismatch repair protein MutS.